We begin with the raw amino-acid sequence, 763 residues long: Protein translocase subunit SecA 2 (763 aa).

Residues Gln83, 101 to 105 (GEGKT), and Asp490 contribute to the ATP site.

Belongs to the SecA family. Monomer and homodimer. Part of the essential Sec protein translocation apparatus which comprises SecA, SecYEG and auxiliary proteins SecDF. Other proteins may also be involved.

It localises to the cell membrane. It is found in the cytoplasm. The catalysed reaction is ATP + H2O + cellular proteinSide 1 = ADP + phosphate + cellular proteinSide 2.. Functionally, part of the Sec protein translocase complex. Interacts with the SecYEG preprotein conducting channel. Has a central role in coupling the hydrolysis of ATP to the transfer of proteins into and across the cell membrane, serving as an ATP-driven molecular motor driving the stepwise translocation of polypeptide chains across the membrane. The sequence is that of Protein translocase subunit SecA 2 from Corynebacterium efficiens (strain DSM 44549 / YS-314 / AJ 12310 / JCM 11189 / NBRC 100395).